We begin with the raw amino-acid sequence, 1561 residues long: ABC-type transporter phomO' (1561 aa).

7 helical membrane-spanning segments follow: residues 34–54 (LYFE…LLAA), 110–130 (CTAG…CTTV), 139–159 (SVPA…LAHF), 172–192 (SSSL…APLV), 202–222 (GSAL…LIAV), 314–334 (LGLY…FTLA), and 358–378 (GLIG…GWYW). The region spanning 326-599 (LCLAGFTLAQ…LLQIIPSFGA (274 aa)) is the ABC transmembrane type-1 1 domain. Asn-384 carries an N-linked (GlcNAc...) asparagine glycan. The next 4 membrane-spanning stretches (helical) occupy residues 428 to 448 (LAYA…TWML), 452 to 472 (VGPP…TSTY), 535 to 555 (LIVG…VLVF), and 577 to 597 (LIWI…IPSF). In terms of domain architecture, ABC transporter 1 spans 645 to 871 (IHNSSFSYTD…VEDENGDVDN (227 aa)). The N-linked (GlcNAc...) asparagine glycan is linked to Asn-647. 678–685 (GPAGCGKS) is an ATP binding site. Asn-721 is a glycosylation site (N-linked (GlcNAc...) asparagine). Residues 853-899 (YQFPPSQADVEDENGDVDNGAENTRPRESSHTTEAQSGPPEPKSKPT) are disordered. 4 helical membrane-spanning segments follow: residues 913–933 (SIGF…AFCL), 969–989 (VLPL…IVPL), 1037–1054 (LFNT…VILI), and 1147–1167 (LVLN…AVGL). The ABC transmembrane type-1 2 domain occupies 920–1209 (VLFIGGGIIF…LLTAWTSLET (290 aa)). An N-linked (GlcNAc...) asparagine glycan is attached at Asn-1189. Residues 1229-1238 (DVLVRPDSLD) show a composition bias toward basic and acidic residues. The interval 1229–1298 (DVLVRPDSLD…DVAADGEKHE (70 aa)) is disordered. Acidic residues predominate over residues 1269–1280 (YDDDDESDENTD). An ABC transporter 2 domain is found at 1297–1545 (HEATTITTTS…SDIFAFFGRS (249 aa)). An ATP-binding site is contributed by 1333–1340 (GRTGSGKS). Asn-1496 is a glycosylation site (N-linked (GlcNAc...) asparagine).

The protein belongs to the ABC transporter superfamily. ABCC family. Conjugate transporter (TC 3.A.1.208) subfamily.

The protein resides in the membrane. ABC-type transporter; part of the gene cluster that mediates the biosynthesis of the phomopsins, a group of hexapeptide mycotoxins which infects lupins and causes lupinosis disease in livestock. The polypeptide is ABC-type transporter phomO' (Diaporthe leptostromiformis (Lupinosis disease fungus)).